Here is a 145-residue protein sequence, read N- to C-terminus: Deoxyuridine 5'-triphosphate nucleotidohydrolase (145 aa).

Substrate-binding positions include 62–64 (RSG), asparagine 75, 79–81 (TVD), and lysine 89.

This sequence belongs to the dUTPase family. The cofactor is Mg(2+).

The enzyme catalyses dUTP + H2O = dUMP + diphosphate + H(+). Its pathway is pyrimidine metabolism; dUMP biosynthesis; dUMP from dCTP (dUTP route): step 2/2. This enzyme is involved in nucleotide metabolism: it produces dUMP, the immediate precursor of thymidine nucleotides and it decreases the intracellular concentration of dUTP so that uracil cannot be incorporated into DNA. This Helicobacter pylori (strain Shi470) protein is Deoxyuridine 5'-triphosphate nucleotidohydrolase.